We begin with the raw amino-acid sequence, 1755 residues long: Transposon Ty1-LR3 Gag-Pol polyprotein (1755 aa).

A compositionally biased stretch (low complexity) spans 1–16; sequence MESQQLSQHSHISHGS. 3 disordered regions span residues 1-93, 126-173, and 352-421; these read MESQ…MMTQ, PQSQ…RPPP, and GSRN…SKST. 2 stretches are compositionally biased toward polar residues: residues 48–60 and 127–152; these read TKAN…TPAS and QSQF…GNTF. Residues 153-165 are compositionally biased toward low complexity; that stretch reads TDSSSADSDMTST. Residues 299–401 are RNA-binding; sequence NNGIHINNKV…NSKSKTARAH (103 aa). A compositionally biased stretch (low complexity) spans 402 to 418; sequence NVSTSNNSPSTDNDSIS. The residue at position 416 (Ser-416) is a Phosphoserine. The active-site For protease activity; shared with dimeric partner is Asp-461. The tract at residues 583-640 is integrase-type zinc finger-like; that stretch reads NVHTSESTRKYPYPFIHRMLAHANAQTIRYSLKNNTITYFNESDVDWSSAIDYQCPDC. The Integrase catalytic domain occupies 660-829; that stretch reads NSYEPFQYLH…SQHAGLAGLD (170 aa). Asp-671 and Asp-736 together coordinate Mg(2+). 3 disordered regions span residues 956–1087, 1092–1111, and 1129–1172; these read SKAV…ETEK, RSPS…NIVP, and ADLP…SNAY. The span at 960-969 shows a compositional bias: low complexity; that stretch reads SPTDSTPPST. Polar residues predominate over residues 1005–1015; it reads STPQISNIEST. A compositionally biased stretch (basic and acidic residues) spans 1038 to 1052; sequence ESSHASKSKDFRHSD. Polar residues-rich tracts occupy residues 1053 to 1082 and 1101 to 1111; these read SYSN…QISD and PENNSSHNIVP. Residues 1178–1212 carry the Bipartite nuclear localization signal motif; that stretch reads KKRSLEDNETEIKVSRDTWNTKNMRSLEPPRSKKR. The 139-residue stretch at 1338–1476 folds into the Reverse transcriptase Ty1/copia-type domain; the sequence is NNYYITQLDI…DILGLEIKYQ (139 aa). Mg(2+) contacts are provided by Asp-1346, Asp-1427, Asp-1428, Asp-1610, Glu-1652, and Asp-1685. The region spanning 1610 to 1752 is the RNase H Ty1/copia-type domain; the sequence is DASYGNQPYY…IKTFKLLTNK (143 aa).

The capsid protein forms a homotrimer, from which the VLPs are assembled. The protease is a homodimer, whose active site consists of two apposed aspartic acid residues. In terms of processing, initially, virus-like particles (VLPs) are composed of the structural unprocessed proteins Gag and Gag-Pol, and also contain the host initiator methionine tRNA (tRNA(i)-Met) which serves as a primer for minus-strand DNA synthesis, and a dimer of genomic Ty RNA. Processing of the polyproteins occurs within the particle and proceeds by an ordered pathway, called maturation. First, the protease (PR) is released by autocatalytic cleavage of the Gag-Pol polyprotein yielding capsid protein p45 and a Pol-p154 precursor protein. This cleavage is a prerequisite for subsequent processing of Pol-p154 at the remaining sites to release the mature structural and catalytic proteins. Maturation takes place prior to the RT reaction and is required to produce transposition-competent VLPs.

Its subcellular location is the cytoplasm. The protein localises to the nucleus. It catalyses the reaction DNA(n) + a 2'-deoxyribonucleoside 5'-triphosphate = DNA(n+1) + diphosphate. It carries out the reaction Endonucleolytic cleavage to 5'-phosphomonoester.. In terms of biological role, capsid protein (CA) is the structural component of the virus-like particle (VLP), forming the shell that encapsulates the retrotransposons dimeric RNA genome. The particles are assembled from trimer-clustered units and there are holes in the capsid shells that allow for the diffusion of macromolecules. CA also has nucleocapsid-like chaperone activity, promoting primer tRNA(i)-Met annealing to the multipartite primer-binding site (PBS), dimerization of Ty1 RNA and initiation of reverse transcription. Functionally, the aspartyl protease (PR) mediates the proteolytic cleavages of the Gag and Gag-Pol polyproteins after assembly of the VLP. Reverse transcriptase/ribonuclease H (RT) is a multifunctional enzyme that catalyzes the conversion of the retro-elements RNA genome into dsDNA within the VLP. The enzyme displays a DNA polymerase activity that can copy either DNA or RNA templates, and a ribonuclease H (RNase H) activity that cleaves the RNA strand of RNA-DNA heteroduplexes during plus-strand synthesis and hydrolyzes RNA primers. The conversion leads to a linear dsDNA copy of the retrotransposon that includes long terminal repeats (LTRs) at both ends. Its function is as follows. Integrase (IN) targets the VLP to the nucleus, where a subparticle preintegration complex (PIC) containing at least integrase and the newly synthesized dsDNA copy of the retrotransposon must transit the nuclear membrane. Once in the nucleus, integrase performs the integration of the dsDNA into the host genome. The sequence is that of Transposon Ty1-LR3 Gag-Pol polyprotein (TY1B-LR3) from Saccharomyces cerevisiae (strain ATCC 204508 / S288c) (Baker's yeast).